Reading from the N-terminus, the 507-residue chain is Wax ester synthase/diacylglycerol acyltransferase 5 (507 aa).

Topologically, residues 1-211 (MEIKIRRRRG…LKTSSRCYSR (211 aa)) are cytoplasmic. Catalysis depends on histidine 161, which acts as the Proton acceptor. The chain crosses the membrane as a helical span at residues 212-232 (FFWLVMVLWSAALLVLNTVCD). The Lumenal segment spans residues 233–507 (ALEFIATALF…VVVQERTSTQ (275 aa)). 2 N-linked (GlcNAc...) asparagine glycosylation sites follow: asparagine 314 and asparagine 421.

The protein in the N-terminal section; belongs to the long-chain O-acyltransferase family. As to expression, mostly expressed in flowers and siliques.

It is found in the cell membrane. The protein localises to the endoplasmic reticulum membrane. The enzyme catalyses a long chain fatty alcohol + a fatty acyl-CoA = a wax ester + CoA. The catalysed reaction is an acyl-CoA + a 1,2-diacyl-sn-glycerol = a triacyl-sn-glycerol + CoA. It participates in glycerolipid metabolism; triacylglycerol biosynthesis. It functions in the pathway lipid metabolism. Bifunctional wax ester synthase/diacylglycerol acyltransferase. Involved in cuticular wax biosynthesis. The polypeptide is Wax ester synthase/diacylglycerol acyltransferase 5 (Arabidopsis thaliana (Mouse-ear cress)).